We begin with the raw amino-acid sequence, 856 residues long: Envelope glycoprotein gp160 (856 aa).

The N-terminal stretch at 1-31 (MKVKGIQGNWQNWWKWGTLILGLVIICSAAE) is a signal peptide. At 32-684 (NLWVTVYYGV…ISNWLWYIKI (653 aa)) the chain is on the extracellular side. Cysteine 53 and cysteine 73 are joined by a disulfide. N-linked (GlcNAc...) asparagine; by host glycosylation is found at asparagine 87, asparagine 132, asparagine 138, asparagine 152, asparagine 156, asparagine 183, and asparagine 198. 5 cysteine pairs are disulfide-bonded: cysteine 118-cysteine 206, cysteine 125-cysteine 197, cysteine 130-cysteine 153, cysteine 219-cysteine 248, and cysteine 229-cysteine 240. A V1 region spans residues 130-152 (CHNITIKDNNTNVDTEMKEEIKN). The interval 153–197 (CSYNMTTELRDKQRKIYSLFYRLDIVPIGGNSSNGDSSKYRLINC) is V2. N-linked (GlcNAc...) asparagine; by host glycosylation is found at asparagine 242, asparagine 263, asparagine 277, asparagine 294, asparagine 302, asparagine 332, asparagine 339, asparagine 355, and asparagine 364. The tract at residues 297–330 (CMRPNNNTRKSISIGPGRAFFATGDIIGDIRQAH) is V3. Cysteine 297 and cysteine 331 are disulfide-bonded. Residues 365–375 (SSGGDVEITTH) form a CD4-binding loop region. Cystine bridges form between cysteine 379–cysteine 445 and cysteine 386–cysteine 418. Residues 386 to 418 (CNTSGLFNGTWLNGTSNNTWKIDTVNDTIILPC) are V4. Asparagine 387, asparagine 393, asparagine 398, asparagine 402, asparagine 411, asparagine 448, asparagine 461, asparagine 462, and asparagine 465 each carry an N-linked (GlcNAc...) asparagine; by host glycan. V5 stretches follow at residues 461–471 (NNTSNETFRPG) and 463–471 (TSNETFRPG). Residues 512–532 (AIGMGAFFLGFLGAAGSTMGA) form a fusion peptide region. The segment at 574 to 592 (KQLQARILAVERYLKDQQL) is immunosuppression. A disulfide bridge connects residues cysteine 598 and cysteine 604. N-linked (GlcNAc...) asparagine; by host glycans are attached at residues asparagine 611, asparagine 616, and asparagine 637. Residues 633–667 (KEVSNYTQVIYNLIEESQTQQEINERDLLALDKWA) adopt a coiled-coil conformation. The tract at residues 662-683 (ALDKWANLWNWFDISNWLWYIK) is MPER; binding to GalCer. A helical membrane pass occupies residues 685–705 (FIMIVGGLIGLRIVFAVLSII). Residues 706 to 856 (NRVRQGYSPL…IRQGLERALL (151 aa)) are Cytoplasmic-facing. The YXXL motif; contains endocytosis signal motif lies at 712-715 (YSPL). Residues 720–742 (LTHHQREPDRPERIEEGGGEQDR) form a disordered region. Residues 723 to 742 (HQREPDRPERIEEGGGEQDR) show a composition bias toward basic and acidic residues. Residue cysteine 764 is the site of S-palmitoyl cysteine; by host attachment. The Di-leucine internalization motif motif lies at 855-856 (LL).

This sequence belongs to the HIV-1 env protein family. The mature envelope protein (Env) consists of a homotrimer of non-covalently associated gp120-gp41 heterodimers. The resulting complex protrudes from the virus surface as a spike. There seems to be as few as 10 spikes on the average virion. Interacts with host CD4, CCR5 and CXCR4. Gp120 also interacts with the C-type lectins CD209/DC-SIGN and CLEC4M/DC-SIGNR (collectively referred to as DC-SIGN(R)). Gp120 and gp41 interact with GalCer. Gp120 interacts with host ITGA4/ITGB7 complex; on CD4+ T-cells, this interaction results in rapid activation of integrin ITGAL/LFA-1, which facilitates efficient cell-to-cell spreading of HIV-1. Gp120 interacts with cell-associated heparan sulfate; this interaction increases virus infectivity on permissive cells and may be involved in infection of CD4- cells. As to quaternary structure, the mature envelope protein (Env) consists of a homotrimer of non-covalently associated gp120-gp41 heterodimers. The resulting complex protrudes from the virus surface as a spike. There seems to be as few as 10 spikes on the average virion. In terms of processing, highly glycosylated by host. The high number of glycan on the protein is reffered to as 'glycan shield' because it contributes to hide protein sequence from adaptive immune system. Palmitoylation of the transmembrane protein and of Env polyprotein (prior to its proteolytic cleavage) is essential for their association with host cell membrane lipid rafts. Palmitoylation is therefore required for envelope trafficking to classical lipid rafts, but not for viral replication. Post-translationally, specific enzymatic cleavages in vivo yield mature proteins. Envelope glycoproteins are synthesized as an inactive precursor that is heavily N-glycosylated and processed likely by host cell furin in the Golgi to yield the mature SU and TM proteins. The cleavage site between SU and TM requires the minimal sequence [KR]-X-[KR]-R. About 2 of the 9 disulfide bonds of gp41 are reduced by P4HB/PDI, following binding to CD4 receptor.

Its subcellular location is the virion membrane. The protein localises to the host cell membrane. It localises to the host endosome membrane. Its function is as follows. Oligomerizes in the host endoplasmic reticulum into predominantly trimers. In a second time, gp160 transits in the host Golgi, where glycosylation is completed. The precursor is then proteolytically cleaved in the trans-Golgi and thereby activated by cellular furin or furin-like proteases to produce gp120 and gp41. Functionally, attaches the virus to the host lymphoid cell by binding to the primary receptor CD4. This interaction induces a structural rearrangement creating a high affinity binding site for a chemokine coreceptor like CXCR4 and/or CCR5. Acts as a ligand for CD209/DC-SIGN and CLEC4M/DC-SIGNR, which are respectively found on dendritic cells (DCs), and on endothelial cells of liver sinusoids and lymph node sinuses. These interactions allow capture of viral particles at mucosal surfaces by these cells and subsequent transmission to permissive cells. HIV subverts the migration properties of dendritic cells to gain access to CD4+ T-cells in lymph nodes. Virus transmission to permissive T-cells occurs either in trans (without DCs infection, through viral capture and transmission), or in cis (following DCs productive infection, through the usual CD4-gp120 interaction), thereby inducing a robust infection. In trans infection, bound virions remain infectious over days and it is proposed that they are not degraded, but protected in non-lysosomal acidic organelles within the DCs close to the cell membrane thus contributing to the viral infectious potential during DCs' migration from the periphery to the lymphoid tissues. On arrival at lymphoid tissues, intact virions recycle back to DCs' cell surface allowing virus transmission to CD4+ T-cells. In terms of biological role, acts as a class I viral fusion protein. Under the current model, the protein has at least 3 conformational states: pre-fusion native state, pre-hairpin intermediate state, and post-fusion hairpin state. During fusion of viral and target intracellular membranes, the coiled coil regions (heptad repeats) assume a trimer-of-hairpins structure, positioning the fusion peptide in close proximity to the C-terminal region of the ectodomain. The formation of this structure appears to drive apposition and subsequent fusion of viral and target cell membranes. Complete fusion occurs in host cell endosomes and is dynamin-dependent, however some lipid transfer might occur at the plasma membrane. The virus undergoes clathrin-dependent internalization long before endosomal fusion, thus minimizing the surface exposure of conserved viral epitopes during fusion and reducing the efficacy of inhibitors targeting these epitopes. Membranes fusion leads to delivery of the nucleocapsid into the cytoplasm. The protein is Envelope glycoprotein gp160 of Homo sapiens (Human).